The sequence spans 882 residues: Alanine--tRNA ligase (882 aa).

Positions 576, 580, 678, and 682 each coordinate Zn(2+).

This sequence belongs to the class-II aminoacyl-tRNA synthetase family. Requires Zn(2+) as cofactor.

The protein localises to the cytoplasm. The enzyme catalyses tRNA(Ala) + L-alanine + ATP = L-alanyl-tRNA(Ala) + AMP + diphosphate. Functionally, catalyzes the attachment of alanine to tRNA(Ala) in a two-step reaction: alanine is first activated by ATP to form Ala-AMP and then transferred to the acceptor end of tRNA(Ala). Also edits incorrectly charged Ser-tRNA(Ala) and Gly-tRNA(Ala) via its editing domain. The sequence is that of Alanine--tRNA ligase from Anaplasma marginale (strain St. Maries).